We begin with the raw amino-acid sequence, 115 residues long: Integration host factor subunit alpha (115 aa).

It belongs to the bacterial histone-like protein family. In terms of assembly, heterodimer of an alpha and a beta chain.

Its function is as follows. This protein is one of the two subunits of integration host factor, a specific DNA-binding protein that functions in genetic recombination as well as in transcriptional and translational control. This Burkholderia pseudomallei (strain K96243) protein is Integration host factor subunit alpha.